Consider the following 283-residue polypeptide: Elongation factor Ts (283 aa).

Residues 80–83 (TDFV) are involved in Mg(2+) ion dislocation from EF-Tu.

This sequence belongs to the EF-Ts family.

It localises to the cytoplasm. In terms of biological role, associates with the EF-Tu.GDP complex and induces the exchange of GDP to GTP. It remains bound to the aminoacyl-tRNA.EF-Tu.GTP complex up to the GTP hydrolysis stage on the ribosome. This is Elongation factor Ts from Haemophilus ducreyi (strain 35000HP / ATCC 700724).